A 108-amino-acid chain; its full sequence is Guanine nucleotide-binding protein subunit gamma (108 aa).

The S-palmitoyl cysteine moiety is linked to residue Cys104. Cys105 is modified (cysteine methyl ester). Residue Cys105 is the site of S-farnesyl cysteine attachment. Residues 106-108 constitute a propeptide, removed in mature form; that stretch reads VIS.

This sequence belongs to the G protein gamma family. In terms of assembly, g proteins are composed of 3 units, alpha, beta and gamma.

It localises to the membrane. The sequence is that of Guanine nucleotide-binding protein subunit gamma from Yarrowia lipolytica (strain CLIB 122 / E 150) (Yeast).